Reading from the N-terminus, the 344-residue chain is Ketol-acid reductoisomerase (NADP(+)) (344 aa).

In terms of domain architecture, KARI N-terminal Rossmann spans 2–181; it reads AKVLYEKDIQ…GAARAGVLET (180 aa). Residues 25–28, arginine 48, serine 52, and 82–85 each bind NADP(+); these read YGSQ and DEMQ. Residue histidine 107 is part of the active site. Residue glycine 133 participates in NADP(+) binding. The KARI C-terminal knotted domain maps to 182-327; that stretch reads SFQEETETDL…RELRELMPFV (146 aa). Mg(2+) is bound by residues aspartate 190, glutamate 194, glutamate 226, and glutamate 230. Serine 251 contacts substrate.

The protein belongs to the ketol-acid reductoisomerase family. The cofactor is Mg(2+).

It catalyses the reaction (2R)-2,3-dihydroxy-3-methylbutanoate + NADP(+) = (2S)-2-acetolactate + NADPH + H(+). The enzyme catalyses (2R,3R)-2,3-dihydroxy-3-methylpentanoate + NADP(+) = (S)-2-ethyl-2-hydroxy-3-oxobutanoate + NADPH + H(+). Its pathway is amino-acid biosynthesis; L-isoleucine biosynthesis; L-isoleucine from 2-oxobutanoate: step 2/4. The protein operates within amino-acid biosynthesis; L-valine biosynthesis; L-valine from pyruvate: step 2/4. Its function is as follows. Involved in the biosynthesis of branched-chain amino acids (BCAA). Catalyzes an alkyl-migration followed by a ketol-acid reduction of (S)-2-acetolactate (S2AL) to yield (R)-2,3-dihydroxy-isovalerate. In the isomerase reaction, S2AL is rearranged via a Mg-dependent methyl migration to produce 3-hydroxy-3-methyl-2-ketobutyrate (HMKB). In the reductase reaction, this 2-ketoacid undergoes a metal-dependent reduction by NADPH to yield (R)-2,3-dihydroxy-isovalerate. In Oceanobacillus iheyensis (strain DSM 14371 / CIP 107618 / JCM 11309 / KCTC 3954 / HTE831), this protein is Ketol-acid reductoisomerase (NADP(+)).